Here is a 132-residue protein sequence, read N- to C-terminus: Large ribosomal subunit protein eL28 (132 aa).

Belongs to the eukaryotic ribosomal protein eL28 family.

The protein is Large ribosomal subunit protein eL28 (rpl28) of Dictyostelium discoideum (Social amoeba).